The chain runs to 225 residues: Cytidylate kinase (225 aa).

Residue 11-19 (GPAAAGKST) participates in ATP binding.

This sequence belongs to the cytidylate kinase family. Type 1 subfamily.

It is found in the cytoplasm. It catalyses the reaction CMP + ATP = CDP + ADP. It carries out the reaction dCMP + ATP = dCDP + ADP. The sequence is that of Cytidylate kinase from Bacillus cereus (strain ATCC 10987 / NRS 248).